A 211-amino-acid polypeptide reads, in one-letter code: MRKLSFLDRVIEELDSYARFTKVPLNPSKKSPSSDTIDGKLSEIEKKHSAGLMRVDYTGEICAQGLYRGQASVAKSPQTKEHLYHAAAEEYDHLAWCGERLQELGARPSLLNPFWYWTSFGIGAVAGSISDSLSYGFVVETEKQVMKHLDSHLKSLPVNDNRSREILKQMYIDESEHAVEAEKAGGKKLPKTVKAIMKLQSKVMTTLAYRF.

The Fe cation site is built by Glu60, Glu90, His93, Glu142, Glu174, and His177.

This sequence belongs to the COQ7 family. Fe cation serves as cofactor.

The protein resides in the cell membrane. It catalyses the reaction a 5-methoxy-2-methyl-3-(all-trans-polyprenyl)benzene-1,4-diol + AH2 + O2 = a 3-demethylubiquinol + A + H2O. The protein operates within cofactor biosynthesis; ubiquinone biosynthesis. Functionally, catalyzes the hydroxylation of 2-nonaprenyl-3-methyl-6-methoxy-1,4-benzoquinol during ubiquinone biosynthesis. This chain is 3-demethoxyubiquinol 3-hydroxylase, found in Francisella tularensis subsp. tularensis (strain FSC 198).